Consider the following 527-residue polypeptide: Peptide chain release factor 3 (527 aa).

The region spanning 9–277 (AKRRTFAIIS…AVVDWAPRPL (269 aa)) is the tr-type G domain. GTP-binding positions include 18-25 (SHPDAGKT), 86-90 (DTPGH), and 140-143 (NKLD).

This sequence belongs to the TRAFAC class translation factor GTPase superfamily. Classic translation factor GTPase family. PrfC subfamily.

Its subcellular location is the cytoplasm. In terms of biological role, increases the formation of ribosomal termination complexes and stimulates activities of RF-1 and RF-2. It binds guanine nucleotides and has strong preference for UGA stop codons. It may interact directly with the ribosome. The stimulation of RF-1 and RF-2 is significantly reduced by GTP and GDP, but not by GMP. The sequence is that of Peptide chain release factor 3 from Pseudomonas entomophila (strain L48).